Reading from the N-terminus, the 179-residue chain is Adenine phosphoribosyltransferase (179 aa).

It belongs to the purine/pyrimidine phosphoribosyltransferase family. Homodimer.

It localises to the cytoplasm. The enzyme catalyses AMP + diphosphate = 5-phospho-alpha-D-ribose 1-diphosphate + adenine. Its pathway is purine metabolism; AMP biosynthesis via salvage pathway; AMP from adenine: step 1/1. Its function is as follows. Catalyzes a salvage reaction resulting in the formation of AMP, that is energically less costly than de novo synthesis. This is Adenine phosphoribosyltransferase from Bradyrhizobium sp. (strain ORS 278).